We begin with the raw amino-acid sequence, 486 residues long: NADH-quinone oxidoreductase subunit N (486 aa).

The next 14 helical transmembrane spans lie at 8–28 (LTAL…ILSI), 36–56 (FVAV…YFLI), 74–94 (ILYI…SYPW), 104–124 (EFYL…ISHH), 125–145 (MASF…LIAY), 160–180 (IILS…VYSI), 201–221 (ILVV…KLSI), 239–259 (VLSF…LNFL), 269–289 (VIYF…NLMA), 298–318 (FLGY…LVSH), 329–349 (AIYL…VNLI), 376–396 (SVLT…GFIG), 410–432 (WLIG…RIIL), and 459–479 (IVIC…NPLI).

It belongs to the complex I subunit 2 family. NDH-1 is composed of 13 different subunits. Subunits NuoA, H, J, K, L, M, N constitute the membrane sector of the complex.

The protein localises to the cell membrane. The catalysed reaction is a quinone + NADH + 5 H(+)(in) = a quinol + NAD(+) + 4 H(+)(out). Functionally, NDH-1 shuttles electrons from NADH, via FMN and iron-sulfur (Fe-S) centers, to quinones in the respiratory chain. The immediate electron acceptor for the enzyme in this species is believed to be ubiquinone. Couples the redox reaction to proton translocation (for every two electrons transferred, four hydrogen ions are translocated across the cytoplasmic membrane), and thus conserves the redox energy in a proton gradient. The polypeptide is NADH-quinone oxidoreductase subunit N (Buchnera aphidicola subsp. Acyrthosiphon pisum (strain APS) (Acyrthosiphon pisum symbiotic bacterium)).